We begin with the raw amino-acid sequence, 46 residues long: Cytochrome b559 subunit beta (46 aa).

Residues 21–37 traverse the membrane as a helical segment; it reads WLALHTLGIPTVFFLGA. His-25 contacts heme.

This sequence belongs to the PsbE/PsbF family. As to quaternary structure, heterodimer of an alpha subunit and a beta subunit. PSII is composed of 1 copy each of membrane proteins PsbA, PsbB, PsbC, PsbD, PsbE, PsbF, PsbH, PsbI, PsbJ, PsbK, PsbL, PsbM, PsbT, PsbX, PsbY, PsbZ, Psb30/Ycf12, peripheral proteins PsbO, CyanoQ (PsbQ), PsbU, PsbV and a large number of cofactors. It forms dimeric complexes. Heme b serves as cofactor.

The protein localises to the cellular thylakoid membrane. Functionally, this b-type cytochrome is tightly associated with the reaction center of photosystem II (PSII). PSII is a light-driven water:plastoquinone oxidoreductase that uses light energy to abstract electrons from H(2)O, generating O(2) and a proton gradient subsequently used for ATP formation. It consists of a core antenna complex that captures photons, and an electron transfer chain that converts photonic excitation into a charge separation. The sequence is that of Cytochrome b559 subunit beta from Synechococcus sp. (strain CC9605).